Here is an 85-residue protein sequence, read N- to C-terminus: Small ribosomal subunit protein uS17 (85 aa).

It belongs to the universal ribosomal protein uS17 family. Part of the 30S ribosomal subunit.

One of the primary rRNA binding proteins, it binds specifically to the 5'-end of 16S ribosomal RNA. The sequence is that of Small ribosomal subunit protein uS17 from Agathobacter rectalis (strain ATCC 33656 / DSM 3377 / JCM 17463 / KCTC 5835 / VPI 0990) (Eubacterium rectale).